The following is a 199-amino-acid chain: NAD(P)H dehydrogenase (quinone) (199 aa).

Residues 4–190 enclose the Flavodoxin-like domain; it reads VLVLYYSSYG…EGARHQGELV (187 aa). Residues 10-15 and 78-80 each bind FMN; these read SSYGHI and TRY. Residue Y12 coordinates NAD(+). W98 is a substrate binding site. Residues 113-119 and H134 each bind FMN; that span reads STATQHG.

Belongs to the WrbA family. It depends on FMN as a cofactor.

It carries out the reaction a quinone + NADH + H(+) = a quinol + NAD(+). The catalysed reaction is a quinone + NADPH + H(+) = a quinol + NADP(+). This Paraburkholderia phymatum (strain DSM 17167 / CIP 108236 / LMG 21445 / STM815) (Burkholderia phymatum) protein is NAD(P)H dehydrogenase (quinone).